Consider the following 404-residue polypeptide: XK-related protein 8 (404 aa).

Helical transmembrane passes span 14-34 (FVFSVIGVFTFFVDWGADVWV), 44-64 (FFWFGVLVGLMVLSSVLVQMF), 167-187 (AVQFVSVAASTTSIAWMVVDY), 206-226 (SLIYFLWNLLLIAPRVAALAL), 227-247 (FASVVGGYLGLHLLLLWLVFV), 263-283 (GEWLYRATVGIIWYFSWFNVA), 292-312 (AIYHAFITADGAILLVTWWCC), and 319-339 (EPYALALLLTLLLSYLLGLLF).

This sequence belongs to the XK family.

It is found in the cell membrane. The catalysed reaction is a 1,2-diacyl-sn-glycero-3-phospho-L-serine(in) = a 1,2-diacyl-sn-glycero-3-phospho-L-serine(out). Functionally, phospholipid scramblase that promotes phosphatidylserine exposure on apoptotic cell surface, possibly by mediating phospholipid scrambling. Phosphatidylserine is a specific marker only present at the surface of apoptotic cells and acts as a specific signal for engulfment. This is XK-related protein 8 from Tetraodon nigroviridis (Spotted green pufferfish).